Here is a 127-residue protein sequence, read N- to C-terminus: Large ribosomal subunit protein bL20 (127 aa).

This sequence belongs to the bacterial ribosomal protein bL20 family.

Binds directly to 23S ribosomal RNA and is necessary for the in vitro assembly process of the 50S ribosomal subunit. It is not involved in the protein synthesizing functions of that subunit. This is Large ribosomal subunit protein bL20 from Corynebacterium diphtheriae (strain ATCC 700971 / NCTC 13129 / Biotype gravis).